A 520-amino-acid polypeptide reads, in one-letter code: Eukaryotic translation initiation factor 3 subunit L (520 aa).

The PCI domain occupies 278-478; it reads FATYYYVGIC…ELDIALENDL (201 aa).

The protein belongs to the eIF-3 subunit L family. Component of the eukaryotic translation initiation factor 3 (eIF-3) complex.

The protein resides in the cytoplasm. Its function is as follows. Component of the eukaryotic translation initiation factor 3 (eIF-3) complex, which is involved in protein synthesis of a specialized repertoire of mRNAs and, together with other initiation factors, stimulates binding of mRNA and methionyl-tRNAi to the 40S ribosome. The eIF-3 complex specifically targets and initiates translation of a subset of mRNAs involved in cell proliferation. The polypeptide is Eukaryotic translation initiation factor 3 subunit L (Yarrowia lipolytica (strain CLIB 122 / E 150) (Yeast)).